The following is a 352-amino-acid chain: 4-hydroxy-2-oxovalerate aldolase (352 aa).

The Pyruvate carboxyltransferase domain maps to 14–266 (VRMTDTSLRD…KTGIDFFDIA (253 aa)). A substrate-binding site is contributed by 22–23 (RD). D23 contacts Mn(2+). H26 (proton acceptor) is an active-site residue. Positions 176 and 205 each coordinate substrate. 2 residues coordinate Mn(2+): H205 and H207. Y296 is a binding site for substrate.

Belongs to the 4-hydroxy-2-oxovalerate aldolase family.

The enzyme catalyses (S)-4-hydroxy-2-oxopentanoate = acetaldehyde + pyruvate. This is 4-hydroxy-2-oxovalerate aldolase from Mycolicibacterium gilvum (strain PYR-GCK) (Mycobacterium gilvum (strain PYR-GCK)).